A 312-amino-acid polypeptide reads, in one-letter code: Methionyl-tRNA formyltransferase (312 aa).

Position 112–115 (112–115 (SLLP)) interacts with (6S)-5,6,7,8-tetrahydrofolate.

Belongs to the Fmt family.

The enzyme catalyses L-methionyl-tRNA(fMet) + (6R)-10-formyltetrahydrofolate = N-formyl-L-methionyl-tRNA(fMet) + (6S)-5,6,7,8-tetrahydrofolate + H(+). Attaches a formyl group to the free amino group of methionyl-tRNA(fMet). The formyl group appears to play a dual role in the initiator identity of N-formylmethionyl-tRNA by promoting its recognition by IF2 and preventing the misappropriation of this tRNA by the elongation apparatus. This Magnetococcus marinus (strain ATCC BAA-1437 / JCM 17883 / MC-1) protein is Methionyl-tRNA formyltransferase.